The sequence spans 297 residues: Translocase of chloroplast 33, chloroplastic (297 aa).

The 225-residue stretch at 34-258 (MNSMTVLVLG…HVDKKMVDGS (225 aa)) folds into the AIG1-type G domain. Residues 37-53 (MTVLVLGKGGVGKSSTV) form a helical membrane-spanning segment. Residues 46-51 (GVGKSS) and 65-70 (SPFQAE) contribute to the GTP site. 2 residues coordinate Mg(2+): Ser-50 and Gln-68. Homodimerization regions lie at residues 65-68 (SPFQ) and 125-130 (RLDVYR). His-160 is a binding site for GTP. Ser-181 carries the post-translational modification Phosphoserine. 208 to 209 (EN) is a GTP binding site.

This sequence belongs to the TRAFAC class TrmE-Era-EngA-EngB-Septin-like GTPase superfamily. AIG1/Toc34/Toc159-like paraseptin GTPase family. TOC34 subfamily. Homodimer, heterodimer with TOC34 and TOC159, and monomer. The homodimerization and the dimerization with TOC159 require the binding of GTP on Arg-130, and a hypothetical coGAP factor. The dimeric form has a higher GTPase activity than the monomeric form. Part of the TOC core complex that includes 1 protein for the specific recognition of transit peptides surrounded by a ring composed of four proteins forming translocation channels, and four to five GTP-binding proteins providing energy. This core complex can interact with components of the TIC complex to form a larger import complex. Chloroplastic protein precursor such as prSS (precursor of the RuBisCO small subunit) interacts with these complexes. The TOC complex contains a specific subset of polar lipids such as digalactosyldiacylglyceride (DGDG), phosphatidylcholine (PC) and phosphatidylglycerol (PG). Interacts at least with TOC75-3. Forms large complexes including TOC33, pPORA and OEP161 during pPORA import into plastids at the plastid envelope membrane. Interacts with SP1. Requires Mg(2+) as cofactor. Phosphorylated by a kinase present in the outer envelope of chloroplast. When Ser-181 is phosphorylated, the binding to preprotein, GTP and GDP is inhibited, and thus, GTPase activity is repressed. Mostly expressed in seedlings and flowers, and, to a lower extent, in roots, stems, and leaves.

The protein localises to the plastid. The protein resides in the chloroplast outer membrane. Its function is as follows. GTPase involved in protein precursor import into chloroplasts. Seems to recognize chloroplast-destined precursor proteins and regulate their presentation to the translocation channel through GTP hydrolysis. Binds GTP, GDP, XTP, but not ATP. Probably specialized in the import of nuclear encoded photosynthetic preproteins from the cytoplasm to the chloroplast, especially during early development stages. The protein is Translocase of chloroplast 33, chloroplastic (TOC33) of Arabidopsis thaliana (Mouse-ear cress).